A 176-amino-acid chain; its full sequence is MNQLGALAQVSRFTQNFSMENIKSEFQSLQSKLATLRTPQEFFNFKKISKPQNFGEVQSRVAYNLKYFSSNYGLIIGCLSIYTLLTNLLLLFVIVLVVAGIVGINKLKGEELVTPFGSFKTNQLYTGLVCVAVPIGFLASPISTLLWLIGASAVSVFGHASLMEKPIETVFDEETV.

Met1 is modified (N-acetylmethionine). The short motif at 11-13 (SRF) is the SKL peroxisome targeting motif element. Ser18 is modified (phosphoserine). 2 helical membrane-spanning segments follow: residues 84–104 (LLTN…IVGI) and 129–149 (VCVA…LWLI).

Belongs to the PRA1 family. As to quaternary structure, interacts with YIP1 and the Rab GTPases SEC4, YPT1, YPT6, YPT10, YPT11, YPT31, YPT32 and YPT52.

The protein localises to the golgi apparatus membrane. It is found in the peroxisome membrane. The protein is Prenylated Rab acceptor 1 (YIP3) of Saccharomyces cerevisiae (strain ATCC 204508 / S288c) (Baker's yeast).